A 119-amino-acid polypeptide reads, in one-letter code: Large ribosomal subunit protein uL18 (119 aa).

It belongs to the universal ribosomal protein uL18 family. Part of the 50S ribosomal subunit; part of the 5S rRNA/L5/L18/L25 subcomplex. Contacts the 5S and 23S rRNAs.

This is one of the proteins that bind and probably mediate the attachment of the 5S RNA into the large ribosomal subunit, where it forms part of the central protuberance. This Chelativorans sp. (strain BNC1) protein is Large ribosomal subunit protein uL18.